A 67-amino-acid chain; its full sequence is Large ribosomal subunit protein uL29 (67 aa).

This sequence belongs to the universal ribosomal protein uL29 family.

The protein is Large ribosomal subunit protein uL29 of Sphingopyxis alaskensis (strain DSM 13593 / LMG 18877 / RB2256) (Sphingomonas alaskensis).